We begin with the raw amino-acid sequence, 1407 residues long: Probable phosphoribosylformylglycinamidine synthase, chloroplastic/mitochondrial (1407 aa).

A chloroplast and mitochondrion-targeting transit peptide spans 1–53 (MNTSQATRAALFLNGSNRQAMLLQRSSMSQLWGSVRMRTSRLSLNRTKAVSLR). ATP contacts are provided by residues 407–418 (GAETGAGGRIRD), 487–489 (QGY), and Ala-786. Mg(2+)-binding residues include Asp-787, Glu-826, Asn-830, and Asp-989. Ser-991 serves as a coordination point for ATP. The Glutamine amidotransferase type-1 domain maps to 1141-1381 (KVAVIREEGS…LMWQFPWYPT (241 aa)). Cys-1235 (nucleophile) is an active-site residue. Catalysis depends on residues His-1366 and Glu-1368.

It in the N-terminal section; belongs to the FGAMS family.

The protein localises to the plastid. Its subcellular location is the chloroplast. It is found in the mitochondrion. The enzyme catalyses N(2)-formyl-N(1)-(5-phospho-beta-D-ribosyl)glycinamide + L-glutamine + ATP + H2O = 2-formamido-N(1)-(5-O-phospho-beta-D-ribosyl)acetamidine + L-glutamate + ADP + phosphate + H(+). Its pathway is purine metabolism; IMP biosynthesis via de novo pathway; 5-amino-1-(5-phospho-D-ribosyl)imidazole from N(2)-formyl-N(1)-(5-phospho-D-ribosyl)glycinamide: step 1/2. Its function is as follows. Essential to the male gametophyte development. Phosphoribosylformylglycinamidine synthase involved in the purines biosynthetic pathway. Catalyzes the ATP-dependent conversion of formylglycinamide ribonucleotide (FGAR) and glutamine to yield formylglycinamidine ribonucleotide (FGAM) and glutamate. The protein is Probable phosphoribosylformylglycinamidine synthase, chloroplastic/mitochondrial of Arabidopsis thaliana (Mouse-ear cress).